We begin with the raw amino-acid sequence, 159 residues long: Phosphopantetheine adenylyltransferase (159 aa).

Serine 9 is a substrate binding site. ATP is bound by residues 9 to 10 (SF) and histidine 17. Residues lysine 41, leucine 73, and lysine 87 each contribute to the substrate site. ATP contacts are provided by residues 88–90 (GLR), glutamate 98, and 123–129 (YGYLSSS).

The protein belongs to the bacterial CoaD family. As to quaternary structure, homohexamer. Requires Mg(2+) as cofactor.

The protein localises to the cytoplasm. It catalyses the reaction (R)-4'-phosphopantetheine + ATP + H(+) = 3'-dephospho-CoA + diphosphate. It functions in the pathway cofactor biosynthesis; coenzyme A biosynthesis; CoA from (R)-pantothenate: step 4/5. Reversibly transfers an adenylyl group from ATP to 4'-phosphopantetheine, yielding dephospho-CoA (dPCoA) and pyrophosphate. The sequence is that of Phosphopantetheine adenylyltransferase from Thermoanaerobacter pseudethanolicus (strain ATCC 33223 / 39E) (Clostridium thermohydrosulfuricum).